Consider the following 44-residue polypeptide: Small, acid-soluble spore protein N (44 aa).

Positions 1–44 (MGNPKKNSKDFAPNHIGTQSKKAGGNKGKQMQDQTGKQPIVDNG) are disordered.

It belongs to the SspN family.

The protein localises to the spore core. In Bacillus anthracis (strain A0248), this protein is Small, acid-soluble spore protein N.